The sequence spans 365 residues: Quinone oxidoreductase-like protein 2 homolog (365 aa).

The protein belongs to the zinc-containing alcohol dehydrogenase family. Quinone oxidoreductase subfamily.

This chain is Quinone oxidoreductase-like protein 2 homolog, found in Nematostella vectensis (Starlet sea anemone).